The primary structure comprises 599 residues: Endo-1,4-beta-xylanase B (599 aa).

Residues 1-37 (MTISASDYRHPGNFLKRTTALLCVGTALTALAFNASA) form the signal peptide. The region spanning 38 to 136 (ACTYTIDSEW…TVTGAACNSA (99 aa)) is the CBM2 domain. Cys-39 and Cys-133 form a disulfide bridge. Residues 163-289 (LLQEAQAGFC…LPNIDSLSVV (127 aa)) form the CBM6 domain. The GH10 domain maps to 315-595 (SSSAASAKKF…RPAMTWLINN (281 aa)). Glu-431 acts as the Proton donor in catalysis. Glu-530 (nucleophile) is an active-site residue.

This sequence belongs to the glycosyl hydrolase 10 (cellulase F) family.

The catalysed reaction is Endohydrolysis of (1-&gt;4)-beta-D-xylosidic linkages in xylans.. It participates in glycan metabolism; hemicellulose degradation. In terms of biological role, xylanase B contributes to hydrolyze hemicellulose, the major component of plant cell-walls. This is Endo-1,4-beta-xylanase B (xynB) from Cellvibrio japonicus (strain Ueda107) (Pseudomonas fluorescens subsp. cellulosa).